We begin with the raw amino-acid sequence, 197 residues long: Small ribosomal subunit protein uS11m (197 aa).

The span at 43-52 (AAKEEVEKAE) shows a compositional bias: basic and acidic residues. Residues 43–66 (AAKEEVEKAETPAPAPSRSSFSIY) form a disordered region.

It belongs to the universal ribosomal protein uS11 family. Component of the mitochondrial ribosome small subunit (28S) which comprises a 12S rRNA and about 30 distinct proteins.

Its subcellular location is the mitochondrion. The sequence is that of Small ribosomal subunit protein uS11m (MRPS11) from Bos taurus (Bovine).